A 129-amino-acid polypeptide reads, in one-letter code: D-ribose pyranase (129 aa).

His-20 serves as the catalytic Proton donor. Substrate is bound by residues Asp-28, His-96, and 118-120 (YAN).

The protein belongs to the RbsD / FucU family. RbsD subfamily. As to quaternary structure, homodecamer.

The protein resides in the cytoplasm. The enzyme catalyses beta-D-ribopyranose = beta-D-ribofuranose. The protein operates within carbohydrate metabolism; D-ribose degradation; D-ribose 5-phosphate from beta-D-ribopyranose: step 1/2. Functionally, catalyzes the interconversion of beta-pyran and beta-furan forms of D-ribose. This is D-ribose pyranase from Shouchella clausii (strain KSM-K16) (Alkalihalobacillus clausii).